The chain runs to 175 residues: Adenylyl-sulfate kinase (175 aa).

12–19 contributes to the ATP binding site; the sequence is GLSGAGKT. The active-site Phosphoserine intermediate is S86.

It belongs to the APS kinase family.

The catalysed reaction is adenosine 5'-phosphosulfate + ATP = 3'-phosphoadenylyl sulfate + ADP + H(+). It functions in the pathway sulfur metabolism; hydrogen sulfide biosynthesis; sulfite from sulfate: step 2/3. Its function is as follows. Catalyzes the synthesis of activated sulfate. This is Adenylyl-sulfate kinase from Synechococcus sp. (strain JA-2-3B'a(2-13)) (Cyanobacteria bacterium Yellowstone B-Prime).